Here is a 340-residue protein sequence, read N- to C-terminus: GTP 3',8-cyclase (340 aa).

One can recognise a Radical SAM core domain in the interval 8–227 (KLGRPIRDLR…DMIESHFDIE (220 aa)). Position 17 (Arg17) interacts with GTP. The [4Fe-4S] cluster site is built by Cys24 and Cys28. Residue Tyr30 coordinates S-adenosyl-L-methionine. A [4Fe-4S] cluster-binding site is contributed by Cys31. Residue Arg71 participates in GTP binding. Gly75 contributes to the S-adenosyl-L-methionine binding site. Thr102 serves as a coordination point for GTP. Residue Ser126 coordinates S-adenosyl-L-methionine. Lys163 provides a ligand contact to GTP. Residue Met197 participates in S-adenosyl-L-methionine binding. [4Fe-4S] cluster contacts are provided by Cys261 and Cys264. Residue 266–268 (RAR) participates in GTP binding. Cys278 contributes to the [4Fe-4S] cluster binding site.

This sequence belongs to the radical SAM superfamily. MoaA family. In terms of assembly, monomer and homodimer. It depends on [4Fe-4S] cluster as a cofactor.

It carries out the reaction GTP + AH2 + S-adenosyl-L-methionine = (8S)-3',8-cyclo-7,8-dihydroguanosine 5'-triphosphate + 5'-deoxyadenosine + L-methionine + A + H(+). Its pathway is cofactor biosynthesis; molybdopterin biosynthesis. In terms of biological role, catalyzes the cyclization of GTP to (8S)-3',8-cyclo-7,8-dihydroguanosine 5'-triphosphate. The sequence is that of GTP 3',8-cyclase from Staphylococcus haemolyticus (strain JCSC1435).